The chain runs to 398 residues: E3 ubiquitin-protein ligase RSL1 (398 aa).

The tract at residues 155 to 374 (QKETCNICLN…LDLTQCCGSC (220 aa)) is TRIAD supradomain. The Zn(2+) site is built by cysteine 159, cysteine 162, cysteine 183, cysteine 186, cysteine 246, cysteine 251, cysteine 271, cysteine 274, cysteine 279, cysteine 282, histidine 287, cysteine 292, cysteine 321, and cysteine 324. The RING-type 3; degenerate zinc-finger motif lies at 159–207 (CNICLNDDINADQMFSVDKSGHMCCSECVKRHIEVRLLEGSLITCPHYR). An RING-type 1 zinc finger spans residues 159 to 208 (CNICLNDDINADQMFSVDKSGHMCCSECVKRHIEVRLLEGSLITCPHYRC). The IBR-type zinc-finger motif lies at 233 to 292 (TKDELIPVMDRVYCPNPRCSTLMSETELSGLNIGVRRCCVKCGEPFCVKCKVSWHNNLSC). An RING-type 2; atypical zinc finger spans residues 321 to 349 (CSKCKHMIELSSGCISVVCRCGHTFCYQC). An RING-type 4; degenerate zinc finger spans residues 321–356 (CSKCKHMIELSSGCISVVCRCGHTFCYQCGADAGDC). Cysteine 334 is a catalytic residue. 6 residues coordinate Zn(2+): cysteine 339, cysteine 341, cysteine 346, cysteine 349, histidine 358, and cysteine 370. The chain crosses the membrane as a helical span at residues 374 to 394 (CCCFVFFLVIIAIVVTIILLV).

It belongs to the RBR family. As to quaternary structure, interacts with the PYL4 and PYR1 ABA receptors at the plasma membrane. Zn(2+) serves as cofactor.

It localises to the cell membrane. Its subcellular location is the vacuole membrane. The enzyme catalyses [E2 ubiquitin-conjugating enzyme]-S-ubiquitinyl-L-cysteine + [acceptor protein]-L-lysine = [E2 ubiquitin-conjugating enzyme]-L-cysteine + [acceptor protein]-N(6)-ubiquitinyl-L-lysine.. The protein operates within protein modification; protein ubiquitination. Functionally, acts as an E3 ubiquitin-protein ligase, or as part of E3 complex, which accepts ubiquitin from specific E2 ubiquitin-conjugating enzymes and then transfers it to substrates. Negative regulator of the abscisic acid (ABA) signaling pathway which targets PYL4 and PYR1 ABA receptors in plasma membrane to promote their FREE1/FYVE1-dependent trafficking and degradation upon ubiquitynation; this process involves clathrin-mediated endocytosis and trafficking through the ESCRT pathway. Involved in the maintenance of seed longevity. May enhance gibberellins responses. This is E3 ubiquitin-protein ligase RSL1 from Arabidopsis thaliana (Mouse-ear cress).